Reading from the N-terminus, the 659-residue chain is MFGKLTLKAIPVDEPIIMVTYISIILIALFISFSITYFKKWKYLWYEWFTTVDHKKISIMYGILAFIMLFRGFVDAILMRTQQVIASSGNTGFLPPHHYDQIFTAHGVIMIFFVAMPLVIGLMNLVVPLQIGARDVAFPFLNNLSFWLNVSGAILLTLSLGIGEFAQTGWLAYPPLSEVKYSPGVGVDYWIWSLQISGVGTTLTGINFLITILKMRAPGMCFFKMPVFTWAALCTNILIVISFPVLTTTLLLLTLDRCFDFHFFTNNFGGNPMMYVNLIWIWGHPEVYILVLPVFGVFSEVVATFSKKRLFGYVSLVWATLAITILSFIVWLHHFFTMGAGSNVNAFFGITTMIIAIPTGVKIFNWLFTMYQGRVHMHSSMLWTIGFLITFSIGGMTGVLLSIPPADFILHNSLFLVAHFHNVIIGGVVFGCFAGINYWFPKLFGFILNELWGKRAFWFWIIGFFTAFMPLYFLGFMGMTRRLSQNIDIEFHFLLSIAAIGAILIGIGILCQIIQFWVSVRDRHINLDVTGDPWDGRTLEWSTSSPAPLYNFAIIPHIKNKDDFWELKKQKNQVQKKQYSAIHMPKNTGLGIFISFFSLLFGFSAVWNIIWLSFLSFLVVIISLIFKSIDENTEYTVSVKEIESIENRHLENVQKAGLK.

Topologically, residues 1 to 14 are extracellular; the sequence is MFGKLTLKAIPVDE. Residues 15-35 form a helical membrane-spanning segment; the sequence is PIIMVTYISIILIALFISFSI. Residues 36 to 58 lie on the Cytoplasmic side of the membrane; that stretch reads TYFKKWKYLWYEWFTTVDHKKIS. The chain crosses the membrane as a helical span at residues 59 to 79; the sequence is IMYGILAFIMLFRGFVDAILM. Residues R71, D75, and H98 each coordinate a ubiquinone. Residues 80 to 106 lie on the Extracellular side of the membrane; sequence RTQQVIASSGNTGFLPPHHYDQIFTAH. Heme b is bound at residue H106. Residues 107-127 traverse the membrane as a helical segment; sequence GVIMIFFVAMPLVIGLMNLVV. The Cytoplasmic portion of the chain corresponds to 128–145; it reads PLQIGARDVAFPFLNNLS. Residues 146–166 traverse the membrane as a helical segment; the sequence is FWLNVSGAILLTLSLGIGEFA. At 167-189 the chain is on the extracellular side; that stretch reads QTGWLAYPPLSEVKYSPGVGVDY. A heme b-binding site is contributed by W170. The helical transmembrane segment at 190 to 210 threads the bilayer; that stretch reads WIWSLQISGVGTTLTGINFLI. Over 211–225 the chain is Cytoplasmic; sequence TILKMRAPGMCFFKM. The helical transmembrane segment at 226-246 threads the bilayer; the sequence is PVFTWAALCTNILIVISFPVL. Residues 247–277 are Extracellular-facing; it reads TTTLLLLTLDRCFDFHFFTNNFGGNPMMYVN. Residues 278 to 298 traverse the membrane as a helical segment; the sequence is LIWIWGHPEVYILVLPVFGVF. H284 lines the Cu(2+) pocket. The segment at residues 284–288 is a cross-link (1'-histidyl-3'-tyrosine (His-Tyr)); sequence HPEVY. Y288 lines the Fe(II)-heme o pocket. Over 299 to 309 the chain is Cytoplasmic; that stretch reads SEVVATFSKKR. Residues 310 to 330 form a helical membrane-spanning segment; it reads LFGYVSLVWATLAITILSFIV. The Extracellular portion of the chain corresponds to 331–347; the sequence is WLHHFFTMGAGSNVNAF. H333 and H334 together coordinate Cu(2+). The helical transmembrane segment at 348–368 threads the bilayer; sequence FGITTMIIAIPTGVKIFNWLF. The Cytoplasmic portion of the chain corresponds to 369–380; sequence TMYQGRVHMHSS. The helical transmembrane segment at 381–401 threads the bilayer; it reads MLWTIGFLITFSIGGMTGVLL. Topologically, residues 402–413 are extracellular; sequence SIPPADFILHNS. Fe(II)-heme o-binding residues include H411 and H419. The helical transmembrane segment at 414-434 threads the bilayer; the sequence is LFLVAHFHNVIIGGVVFGCFA. H421 contacts heme b. Residues 435-456 lie on the Cytoplasmic side of the membrane; that stretch reads GINYWFPKLFGFILNELWGKRA. A helical transmembrane segment spans residues 457-477; it reads FWFWIIGFFTAFMPLYFLGFM. Residues 478–490 lie on the Extracellular side of the membrane; that stretch reads GMTRRLSQNIDIE. R481 and R482 together coordinate heme b. A helical transmembrane segment spans residues 491–511; it reads FHFLLSIAAIGAILIGIGILC. Residues 512 to 580 are Cytoplasmic-facing; the sequence is QIIQFWVSVR…KNQVQKKQYS (69 aa). Residues 581–601 traverse the membrane as a helical segment; sequence AIHMPKNTGLGIFISFFSLLF. Residues 602–605 are Extracellular-facing; sequence GFSA. Residues 606–626 traverse the membrane as a helical segment; it reads VWNIIWLSFLSFLVVIISLIF. Residues 627–659 lie on the Cytoplasmic side of the membrane; it reads KSIDENTEYTVSVKEIESIENRHLENVQKAGLK.

It belongs to the heme-copper respiratory oxidase family. The cytochrome bo(3) ubiquinol oxidase complex is a heterooctamer of two A chains, two B chains, two C chains and two D chains. It depends on Cu(2+) as a cofactor. Heme b serves as cofactor. The cofactor is Fe(II)-heme o.

The protein resides in the cell membrane. It carries out the reaction 2 a ubiquinol + O2 + n H(+)(in) = 2 a ubiquinone + 2 H2O + n H(+)(out). Its function is as follows. Cytochrome bo(3) ubiquinol oxidase is the terminal enzyme in the aerobic respiratory chain. Catalyzes the four-electron reduction of O2 to water, using a ubiquinol as a membrane soluble electron donor for molecular oxygen reduction. Has proton pump activity across the membrane in addition to electron transfer, pumping 2 protons/electron and generating a proton motive force. All the redox centers of this enzyme complex are located within the largest subunit, subunit I. Protons are probably pumped via D- and K- channels found in this subunit. The protein is Cytochrome bo(3) ubiquinol oxidase subunit 1 (cyoB) of Buchnera aphidicola subsp. Schizaphis graminum (strain Sg).